The following is a 466-amino-acid chain: ATP synthase subunit beta (466 aa).

Gly152–Thr159 provides a ligand contact to ATP.

Belongs to the ATPase alpha/beta chains family. In terms of assembly, F-type ATPases have 2 components, CF(1) - the catalytic core - and CF(0) - the membrane proton channel. CF(1) has five subunits: alpha(3), beta(3), gamma(1), delta(1), epsilon(1). CF(0) has three main subunits: a(1), b(2) and c(9-12). The alpha and beta chains form an alternating ring which encloses part of the gamma chain. CF(1) is attached to CF(0) by a central stalk formed by the gamma and epsilon chains, while a peripheral stalk is formed by the delta and b chains.

The protein localises to the cell inner membrane. The enzyme catalyses ATP + H2O + 4 H(+)(in) = ADP + phosphate + 5 H(+)(out). In terms of biological role, produces ATP from ADP in the presence of a proton gradient across the membrane. The catalytic sites are hosted primarily by the beta subunits. This Helicobacter acinonychis (strain Sheeba) protein is ATP synthase subunit beta.